The primary structure comprises 462 residues: Metal cation symporter ZIP8 (462 aa).

A signal peptide spans 1–19 (MAPGRAVAGLLLLAATSLG). Residues 20-132 (HPSEGPELAF…PSLSEVWGYG (113 aa)) lie on the Extracellular side of the membrane. 3 N-linked (GlcNAc...) asparagine glycosylation sites follow: asparagine 40, asparagine 88, and asparagine 96. Residues 133–153 (FLSVTIINLASLLGLILTPLI) form a helical membrane-spanning segment. Residues 154–160 (KKSYFPK) are Cytoplasmic-facing. Residues 161–181 (ILTYFVGLAIGTLFSNAIFQL) form a helical membrane-spanning segment. Topologically, residues 182–191 (IPEAFGFNPK) are extracellular. The helical transmembrane segment at 192–212 (IDNYVEKAVAVFGGFYMLFFV) threads the bilayer. Residues 213 to 367 (ERTLKMLLKT…LNAGMSTRQA (155 aa)) lie on the Cytoplasmic side of the membrane. An XEXPHE-motif motif is present at residues 345-350 (EEFPHE). Residues 368-388 (LLFNFLSACSCYVGLAFGILV) traverse the membrane as a helical segment. Over 389–390 (GN) the chain is Extracellular. Residues 391 to 411 (NFAPNIIFALAGGMFLYISLA) form a helical membrane-spanning segment. At 412 to 431 (DMFPEMNDMLREKVTGRQTD) the chain is on the cytoplasmic side. Residues 432 to 452 (FTFFMIQNAGMLTGFTAILLI) traverse the membrane as a helical segment. The Extracellular segment spans residues 453–462 (TLYAGDIELQ).

This sequence belongs to the ZIP transporter (TC 2.A.5) family. In terms of assembly, homodimer. Post-translationally, N-glycosylated. N-glycosylation is not required for proper iron and zinc transport. In terms of tissue distribution, ubiquitously expressed.

The protein resides in the cell membrane. It localises to the apical cell membrane. It is found in the basolateral cell membrane. The protein localises to the lysosome membrane. It carries out the reaction Zn(2+)(out) + 2 hydrogencarbonate(out) = Zn(2+)(in) + 2 hydrogencarbonate(in). The enzyme catalyses selenite(out) + Zn(2+)(out) + hydrogencarbonate(out) = selenite(in) + Zn(2+)(in) + hydrogencarbonate(in). It catalyses the reaction Mn(2+)(out) + 2 hydrogencarbonate(out) = Mn(2+)(in) + 2 hydrogencarbonate(in). The catalysed reaction is Cd(2+)(out) + 2 hydrogencarbonate(out) = Cd(2+)(in) + 2 hydrogencarbonate(in). It carries out the reaction Fe(2+)(out) + 2 hydrogencarbonate(out) = Fe(2+)(in) + 2 hydrogencarbonate(in). The enzyme catalyses Co(2+)(out) + 2 hydrogencarbonate(out) = Co(2+)(in) + 2 hydrogencarbonate(in). Its function is as follows. Electroneutral divalent metal cation:bicarbonate symporter of the plasma membrane mediating the cellular uptake of zinc and manganese, two divalent metal cations important for development, tissue homeostasis and immunity. Transports an electroneutral complex composed of a divalent metal cation and two bicarbonate anions or alternatively a bicarbonate and a selenite anion. Thereby, it also contributes to the cellular uptake of selenium, an essential trace metal and micronutrient. Also imports cadmium a non-essential metal which is cytotoxic and carcinogenic. May also transport iron and cobalt through membranes. Through zinc import, indirectly regulates the metal-dependent transcription factor MTF1 and the expression of some metalloproteases involved in cartilage catabolism and also probably heart development. Also indirectly regulates the expression of proteins involved in cell morphology and cytoskeleton organization. Indirectly controls innate immune function and inflammatory response by regulating zinc cellular uptake which in turn modulates the expression of genes specific of these processes. Protects, for instance, cells from injury and death at the onset of inflammation. By regulating zinc influx into monocytes also directly modulates their adhesion to endothelial cells and arteries. Reclaims manganese from the bile at the apical membrane of hepatocytes, thereby regulating the activity of the manganese-dependent enzymes through the systemic levels of the nutrient. Also participates in manganese reabsorption in the proximal tubule of the kidney. By mediating the extracellular uptake of manganese by cells of the blood-brain barrier, may also play a role in the transport of the micronutrient to the brain. With manganese cellular uptake also participates in mitochondrial proper function. Finally, also probably functions intracellularly, translocating zinc from lysosome to cytosol to indirectly enhance the expression of specific genes during TCR-mediated T cell activation. The protein is Metal cation symporter ZIP8 of Mus musculus (Mouse).